A 148-amino-acid polypeptide reads, in one-letter code: Azurin (148 aa).

The N-terminal stretch at 1–18 (MRNQLLFALAFIPTIAAA) is a signal peptide. The region spanning 19 to 148 (ASNCEVNVSA…MMRGTVKLVD (130 aa)) is the Plastocyanin-like domain. Cysteines 22 and 45 form a disulfide. Cu cation contacts are provided by histidine 65, cysteine 131, histidine 136, and methionine 140.

The protein localises to the periplasm. The protein operates within one-carbon metabolism; methylamine degradation. Probable electron acceptor for methylamine dehydrogenase. In Methylobacillus flagellatus (strain ATCC 51484 / DSM 6875 / VKM B-1610 / KT), this protein is Azurin (azu).